A 120-amino-acid polypeptide reads, in one-letter code: Large ribosomal subunit protein uL18 (120 aa).

The protein belongs to the universal ribosomal protein uL18 family. As to quaternary structure, part of the 50S ribosomal subunit; part of the 5S rRNA/L5/L18/L25 subcomplex. Contacts the 5S and 23S rRNAs.

In terms of biological role, this is one of the proteins that bind and probably mediate the attachment of the 5S RNA into the large ribosomal subunit, where it forms part of the central protuberance. This Rhodospirillum centenum (strain ATCC 51521 / SW) protein is Large ribosomal subunit protein uL18.